The following is a 318-amino-acid chain: UDP-N-acetylenolpyruvoylglucosamine reductase (318 aa).

Residues I38–G204 enclose the FAD-binding PCMH-type domain. The active site involves R182. Positions S212–K229 are enriched in basic and acidic residues. The tract at residues S212–G232 is disordered. S233 acts as the Proton donor in catalysis. E310 is a catalytic residue.

The protein belongs to the MurB family. Requires FAD as cofactor.

Its subcellular location is the cytoplasm. The enzyme catalyses UDP-N-acetyl-alpha-D-muramate + NADP(+) = UDP-N-acetyl-3-O-(1-carboxyvinyl)-alpha-D-glucosamine + NADPH + H(+). The protein operates within cell wall biogenesis; peptidoglycan biosynthesis. Cell wall formation. In Leptospira interrogans serogroup Icterohaemorrhagiae serovar Lai (strain 56601), this protein is UDP-N-acetylenolpyruvoylglucosamine reductase.